Reading from the N-terminus, the 438-residue chain is Tol-Pal system protein TolB (438 aa).

An N-terminal signal peptide occupies residues 1–36 (MTPAFRRADLTGFLRTYGAALILLLAAMLAWQPAQA).

It belongs to the TolB family. In terms of assembly, the Tol-Pal system is composed of five core proteins: the inner membrane proteins TolA, TolQ and TolR, the periplasmic protein TolB and the outer membrane protein Pal. They form a network linking the inner and outer membranes and the peptidoglycan layer.

It localises to the periplasm. Part of the Tol-Pal system, which plays a role in outer membrane invagination during cell division and is important for maintaining outer membrane integrity. The chain is Tol-Pal system protein TolB from Bordetella pertussis (strain Tohama I / ATCC BAA-589 / NCTC 13251).